We begin with the raw amino-acid sequence, 269 residues long: 3-methyl-2-oxobutanoate hydroxymethyltransferase (269 aa).

Residues Asp50 and Asp89 each coordinate Mg(2+). 3-methyl-2-oxobutanoate-binding positions include 50–51 (DS), Asp89, and Lys118. Glu120 lines the Mg(2+) pocket. Catalysis depends on Glu187, which acts as the Proton acceptor.

The protein belongs to the PanB family. Homodecamer; pentamer of dimers. It depends on Mg(2+) as a cofactor.

Its subcellular location is the cytoplasm. It carries out the reaction 3-methyl-2-oxobutanoate + (6R)-5,10-methylene-5,6,7,8-tetrahydrofolate + H2O = 2-dehydropantoate + (6S)-5,6,7,8-tetrahydrofolate. The protein operates within cofactor biosynthesis; (R)-pantothenate biosynthesis; (R)-pantoate from 3-methyl-2-oxobutanoate: step 1/2. In terms of biological role, catalyzes the reversible reaction in which hydroxymethyl group from 5,10-methylenetetrahydrofolate is transferred onto alpha-ketoisovalerate to form ketopantoate. In Aliarcobacter butzleri (strain RM4018) (Arcobacter butzleri), this protein is 3-methyl-2-oxobutanoate hydroxymethyltransferase.